The chain runs to 481 residues: Protein FIZZY-RELATED 3 (481 aa).

Positions 100-165 (PAGGQGSASS…RKVPKTPHKV (66 aa)) are disordered. Positions 125–136 (SNSSPSSPFSPS) are enriched in low complexity. The segment covering 154-163 (PPRKVPKTPH) has biased composition (basic residues). WD repeat units follow at residues 172 to 209 (QDDF…VTKL), 213 to 252 (GPND…RVRT), 255 to 292 (GHQT…DFVS), 296 to 335 (GHKS…PILK), 338 to 380 (EHTA…QLNS), 382 to 423 (DTGS…KVAT), and 426 to 465 (GHSM…KMQT).

The protein belongs to the WD repeat CDC20/Fizzy family. As to quaternary structure, associates with the APC/C complex. Interacts with CDC20-1, CDC20-2, CYCA1-1, CYCA3-4, CYCB1-1 and CYCB1-2. Binds to GIG1 and PYM.

It participates in protein modification; protein ubiquitination. In terms of biological role, activator protein that regulates the ubiquitin ligase activity and substrate specificity of the anaphase promoting complex/cyclosome (APC/C). This is Protein FIZZY-RELATED 3 (FZR3) from Arabidopsis thaliana (Mouse-ear cress).